We begin with the raw amino-acid sequence, 198 residues long: Recombination protein RecR (198 aa).

The C4-type zinc-finger motif lies at 57–72 (CTICGHITDTDPCYIC). In terms of domain architecture, Toprim spans 80–175 (TTICVVQDPK…KVTRIAHGLP (96 aa)).

It belongs to the RecR family.

In terms of biological role, may play a role in DNA repair. It seems to be involved in an RecBC-independent recombinational process of DNA repair. It may act with RecF and RecO. This is Recombination protein RecR from Geobacillus kaustophilus (strain HTA426).